The following is a 291-amino-acid chain: Ribose-phosphate pyrophosphokinase (291 aa).

Residues 34 to 36 and 93 to 94 each bind ATP; these read DGE and RQ. Residues histidine 127 and aspartate 165 each contribute to the Mg(2+) site. Lysine 188 is an active-site residue. Residues arginine 190, aspartate 216, and 220-224 contribute to the D-ribose 5-phosphate site; that span reads STGGT.

The protein belongs to the ribose-phosphate pyrophosphokinase family. Class III (archaeal) subfamily. Mg(2+) is required as a cofactor.

The protein localises to the cytoplasm. The catalysed reaction is D-ribose 5-phosphate + ATP = 5-phospho-alpha-D-ribose 1-diphosphate + AMP + H(+). It functions in the pathway metabolic intermediate biosynthesis; 5-phospho-alpha-D-ribose 1-diphosphate biosynthesis; 5-phospho-alpha-D-ribose 1-diphosphate from D-ribose 5-phosphate (route I): step 1/1. Its function is as follows. Involved in the biosynthesis of the central metabolite phospho-alpha-D-ribosyl-1-pyrophosphate (PRPP) via the transfer of pyrophosphoryl group from ATP to 1-hydroxyl of ribose-5-phosphate (Rib-5-P). The chain is Ribose-phosphate pyrophosphokinase from Sulfolobus acidocaldarius (strain ATCC 33909 / DSM 639 / JCM 8929 / NBRC 15157 / NCIMB 11770).